The following is a 73-amino-acid chain: Toxin Td5 (73 aa).

An N-terminal signal peptide occupies residues 1–7 (IGMVVEC). One can recognise an LCN-type CS-alpha/beta domain in the interval 8 to 70 (KDGYLVGNDG…IWNSATNRCR (63 aa)). Cystine bridges form between Cys18–Cys69, Cys22–Cys44, Cys30–Cys50, and Cys34–Cys52. Arg70 carries the post-translational modification Arginine amide.

The protein belongs to the long (4 C-C) scorpion toxin superfamily. Sodium channel inhibitor family. Beta subfamily. Expressed by the venom gland.

The protein localises to the secreted. Functionally, beta toxins bind voltage-independently at site-4 of sodium channels (Nav) and shift the voltage of activation toward more negative potentials thereby affecting sodium channel activation and promoting spontaneous and repetitive firing. This is Toxin Td5 from Tityus discrepans (Venezuelan scorpion).